Here is a 115-residue protein sequence, read N- to C-terminus: Phosphoribosyl-ATP pyrophosphatase (115 aa).

It belongs to the PRA-PH family.

The protein localises to the cytoplasm. It carries out the reaction 1-(5-phospho-beta-D-ribosyl)-ATP + H2O = 1-(5-phospho-beta-D-ribosyl)-5'-AMP + diphosphate + H(+). The protein operates within amino-acid biosynthesis; L-histidine biosynthesis; L-histidine from 5-phospho-alpha-D-ribose 1-diphosphate: step 2/9. The protein is Phosphoribosyl-ATP pyrophosphatase of Bordetella bronchiseptica (strain ATCC BAA-588 / NCTC 13252 / RB50) (Alcaligenes bronchisepticus).